Reading from the N-terminus, the 388-residue chain is Succinyl-diaminopimelate desuccinylase (388 aa).

His84 serves as a coordination point for Zn(2+). The active site involves Asp86. Asp115 contacts Zn(2+). Glu146 (proton acceptor) is an active-site residue. Zn(2+)-binding residues include Glu147, Glu175, and His360.

This sequence belongs to the peptidase M20A family. DapE subfamily. As to quaternary structure, homodimer. Requires Zn(2+) as cofactor. Co(2+) is required as a cofactor.

It catalyses the reaction N-succinyl-(2S,6S)-2,6-diaminopimelate + H2O = (2S,6S)-2,6-diaminopimelate + succinate. The protein operates within amino-acid biosynthesis; L-lysine biosynthesis via DAP pathway; LL-2,6-diaminopimelate from (S)-tetrahydrodipicolinate (succinylase route): step 3/3. Its function is as follows. Catalyzes the hydrolysis of N-succinyl-L,L-diaminopimelic acid (SDAP), forming succinate and LL-2,6-diaminopimelate (DAP), an intermediate involved in the bacterial biosynthesis of lysine and meso-diaminopimelic acid, an essential component of bacterial cell walls. The protein is Succinyl-diaminopimelate desuccinylase of Helicobacter pylori (strain G27).